Consider the following 158-residue polypeptide: MPLTHLNEENQPKMVDIGDKETTERIALASGRISMNKEAYDAIINHCVKKGPVLQTAIIAGIMGAKKTSELIPMCHPIMLNGVDIDILEEKETCSFKLYARVKTQAKTGVEMEALMSVSIGLLTIYDMVKAIDKSMTISGVMLEHKSGGKSGDYNAKK.

Residues 74–76 (MCH) and 112–113 (ME) contribute to the substrate site. Residue Asp127 is part of the active site.

It belongs to the MoaC family. In terms of assembly, homohexamer; trimer of dimers.

It carries out the reaction (8S)-3',8-cyclo-7,8-dihydroguanosine 5'-triphosphate = cyclic pyranopterin phosphate + diphosphate. Its pathway is cofactor biosynthesis; molybdopterin biosynthesis. In terms of biological role, catalyzes the conversion of (8S)-3',8-cyclo-7,8-dihydroguanosine 5'-triphosphate to cyclic pyranopterin monophosphate (cPMP). This Helicobacter pylori (strain ATCC 700392 / 26695) (Campylobacter pylori) protein is Cyclic pyranopterin monophosphate synthase.